Reading from the N-terminus, the 772-residue chain is 1,4-alpha-glucan branching enzyme GlgB (772 aa).

Catalysis depends on Asp431, which acts as the Nucleophile. The active-site Proton donor is Glu484.

This sequence belongs to the glycosyl hydrolase 13 family. GlgB subfamily. In terms of assembly, monomer.

The enzyme catalyses Transfers a segment of a (1-&gt;4)-alpha-D-glucan chain to a primary hydroxy group in a similar glucan chain.. It participates in glycan biosynthesis; glycogen biosynthesis. In terms of biological role, catalyzes the formation of the alpha-1,6-glucosidic linkages in glycogen by scission of a 1,4-alpha-linked oligosaccharide from growing alpha-1,4-glucan chains and the subsequent attachment of the oligosaccharide to the alpha-1,6 position. This Synechococcus sp. (strain RCC307) protein is 1,4-alpha-glucan branching enzyme GlgB.